A 360-amino-acid chain; its full sequence is Tryptophan--tRNA ligase, mitochondrial (360 aa).

ATP contacts are provided by residues Gln38 and 44–47 (HLGN). The short motif at 39–47 (PTGIPHLGN) is the 'HIGH' region element. Residue Asp168 coordinates L-tryptophan. ATP contacts are provided by residues 180–182 (GED) and 229–233 (KMSKS). Over residues 220-230 (IRSLREPEKKM) the composition is skewed to basic and acidic residues. The disordered stretch occupies residues 220-241 (IRSLREPEKKMSKSSGGPRSRI). The short motif at 229–233 (KMSKS) is the 'KMSKS' region element.

Belongs to the class-I aminoacyl-tRNA synthetase family.

It localises to the mitochondrion matrix. The catalysed reaction is tRNA(Trp) + L-tryptophan + ATP = L-tryptophyl-tRNA(Trp) + AMP + diphosphate + H(+). Catalyzes the attachment of tryptophan to tRNA(Trp). The sequence is that of Tryptophan--tRNA ligase, mitochondrial from Caenorhabditis elegans.